We begin with the raw amino-acid sequence, 428 residues long: MRRFLFSDPDFQTAFKAFLDERRGSPADVDAAVAGVLEAVRTQGIEALLDYSRRFDKVDLTAETIRVTAEEIEAGAAETPADVREAIAFAAARIRAYHSRQRPADQAWTDEAGVELGWRWTPLEAVGVYVPGGRAAYPSTVLMNAVPAQVAGVDRIAMVTPPGKLQPAVLAAAKEAGVTEIWRVGGAQAVAALAYGAGPIQPVDKIVGPGNAYVTAAKRRLYGVVGIDALAGPSEIVVVADNKNNPDWIAADLLSQAEHDPAAQSILITDDEAFAAAVEQAIAERLKTLATGEDAAASWRDHGAVIIAPLDESPALVDAIAPEHVEFALDNPERLSDRVRHAGAIFLGRVTPEAIGDYVAGSNHVLPTSRAARFQSGLSIYDFIKRTSIVKCDPASFAVLGPHTVALAKAEGLPAHALSASVRLPSGD.

Residues Y129, Q188, and N211 each contribute to the NAD(+) site. Positions 234, 256, and 259 each coordinate substrate. Residues Q256 and H259 each coordinate Zn(2+). Residues E323 and H324 each act as proton acceptor in the active site. Residues H324, D357, E411, and H416 each coordinate substrate. D357 is a Zn(2+) binding site. Position 416 (H416) interacts with Zn(2+).

Belongs to the histidinol dehydrogenase family. Zn(2+) is required as a cofactor.

The catalysed reaction is L-histidinol + 2 NAD(+) + H2O = L-histidine + 2 NADH + 3 H(+). Its pathway is amino-acid biosynthesis; L-histidine biosynthesis; L-histidine from 5-phospho-alpha-D-ribose 1-diphosphate: step 9/9. Functionally, catalyzes the sequential NAD-dependent oxidations of L-histidinol to L-histidinaldehyde and then to L-histidine. This Caulobacter vibrioides (strain ATCC 19089 / CIP 103742 / CB 15) (Caulobacter crescentus) protein is Histidinol dehydrogenase.